A 259-amino-acid polypeptide reads, in one-letter code: O-antigen export system permease protein RfbA (259 aa).

6 consecutive transmembrane segments (helical) span residues 33 to 53 (LGYL…YFIF), 73 to 95 (FPWQ…NAQI), 111 to 131 (VMME…FLFV), 142 to 162 (WGIP…SIIF), 176 to 196 (VSLG…SDMI), and 228 to 248 (EYIS…LSIF). The ABC transmembrane type-2 domain occupies 33 to 251 (LGYLWSVANP…VVGLSIFNKL (219 aa)).

Belongs to the ABC-2 integral membrane protein family.

It localises to the cell inner membrane. Its function is as follows. May form an ATP-driven O-antigen export apparatus, in association with RfbB. This is O-antigen export system permease protein RfbA (rfbA) from Klebsiella pneumoniae.